The following is a 482-amino-acid chain: Auxin transporter-like protein 4 (482 aa).

At 1–59 the chain is on the cytoplasmic side; that stretch reads MLSQNQAEEAIVTNMNETEQEGGSSLEEIAEDQSMFNFKSFLWHGGSVWDAWFSCASNQ. The chain crosses the membrane as a helical span at residues 60–77; the sequence is VAQVLLTLPYSFSQLGMV. At 78 to 79 the chain is on the extracellular side; it reads SG. The chain crosses the membrane as a helical span at residues 80 to 100; sequence IVFQIFYGLIGSWTAYLISVL. Residues 101–135 lie on the Cytoplasmic side of the membrane; the sequence is YVEYRARKEKENVNFKNHVIQWFEVLDGLLGRYWK. The chain crosses the membrane as a helical span at residues 136–156; it reads ALGLAFNCTFLLFGSVIQLIA. Over 157–172 the chain is Extracellular; the sequence is CASNIYYINDKLDKRT. A helical membrane pass occupies residues 173-193; the sequence is WTYIFGACCATTVFIPSFHNY. Residues 194–196 lie on the Cytoplasmic side of the membrane; sequence RIW. The helical transmembrane segment at 197 to 217 threads the bilayer; that stretch reads SFLGLGMTTYTAWYMAIAAIV. Residues 218 to 232 are Extracellular-facing; sequence NGQIENVVHSGPTKL. The chain crosses the membrane as a helical span at residues 233 to 253; it reads VLYFTGATNILYTFGGHAVTV. Residues 254–266 are Cytoplasmic-facing; the sequence is EIMHAMWKPQKFK. The helical transmembrane segment at 267-287 threads the bilayer; sequence YIYFLATLYVFTLTIPSAVAV. Residues 288–314 lie on the Extracellular side of the membrane; that stretch reads YWAFGDELLNHSNAFSLLPKNGFRDAA. An N-linked (GlcNAc...) asparagine glycan is attached at asparagine 297. The chain crosses the membrane as a helical span at residues 315–335; the sequence is VILMLIHQFITFGFACTPLYF. Residues 336 to 356 lie on the Cytoplasmic side of the membrane; that stretch reads VWEKVIGMHDTKSICLRALVR. The chain crosses the membrane as a helical span at residues 357–377; it reads LPVVIPIWFLAIIFPFFGPIN. A topological domain (extracellular) is located at residue serine 378. Residues 379–399 traverse the membrane as a helical segment; that stretch reads AVGALLVTFTVYIIPALAHML. At 400–422 the chain is on the cytoplasmic side; the sequence is TYRTASARKNAVEKPPSFLPSWT. A helical membrane pass occupies residues 423–443; it reads AVYVLNAFIVVWVLVVGFGFG. Over 444–482 the chain is Extracellular; sequence GWASMTNFIRQIDTFGLFAKCYQCKPPTPPQAPSPHARH.

Belongs to the amino acid/polyamine transporter 2 family. Amino acid/auxin permease (AAAP) (TC 2.A.18.1) subfamily. Shoots and roots of nodulating plants, at low levels.

It is found in the cell membrane. Carrier protein involved in proton-driven auxin influx. Mediates the formation of auxin gradient from developing leaves (site of auxin biosynthesis) to tips by contributing to the loading of auxin in vascular tissues and facilitating acropetal (base to tip) auxin transport within inner tissues of the root apex, and basipetal (tip to base) auxin transport within outer tissues of the root apex. May be involved in lateral roots and nodules formation. The polypeptide is Auxin transporter-like protein 4 (LAX4) (Medicago truncatula (Barrel medic)).